The following is a 277-amino-acid chain: Large ribosomal subunit protein uL2 (277 aa).

Disordered stretches follow at residues 1 to 55 (MGIR…RHQG) and 217 to 277 (KRPS…KKKR). The span at 37 to 55 (LHSKGGRNGHGRITARHQG) shows a compositional bias: basic residues.

It belongs to the universal ribosomal protein uL2 family. As to quaternary structure, part of the 50S ribosomal subunit. Forms a bridge to the 30S subunit in the 70S ribosome.

In terms of biological role, one of the primary rRNA binding proteins. Required for association of the 30S and 50S subunits to form the 70S ribosome, for tRNA binding and peptide bond formation. It has been suggested to have peptidyltransferase activity; this is somewhat controversial. Makes several contacts with the 16S rRNA in the 70S ribosome. The protein is Large ribosomal subunit protein uL2 of Thermobifida fusca (strain YX).